A 318-amino-acid chain; its full sequence is Aquaporin-1 (318 aa).

Residues 1–16 (MVQFGSRANTNMTGLP) show a composition bias toward polar residues. A disordered region spans residues 1–27 (MVQFGSRANTNMTGLPTEQAVEDRRVG). Topologically, residues 1–36 (MVQFGSRANTNMTGLPTEQAVEDRRVGNPKRDRMRN) are cytoplasmic. The chain crosses the membrane as a helical span at residues 37–57 (ALVIVLGEFCGTFMFLLLSFI). The Extracellular portion of the chain corresponds to 58–77 (GAQTALVTNSPSDAGSPLLP). A helical transmembrane segment spans residues 78-98 (FSLMYIAASFGTALAVNVWIF). Residues 99–108 (YRVSGGMFNP) are Cytoplasmic-facing. The NPA 1 signature appears at 107–109 (NPA). The chain crosses the membrane as a helical span at residues 109 to 129 (AVTLGLVLVGAVTPIHALLII). Over 130 to 165 (PTQLVAAITAAGITDALLPGKLLVTNALGNGTSVAQ) the chain is Extracellular. Asn159 is a glycosylation site (N-linked (GlcNAc...) asparagine). Residues 166 to 186 (GVFIEMFLTSQLVLTVYFLAV) form a helical membrane-spanning segment. At 187-193 (EKHRSTH) the chain is on the cytoplasmic side. The helical transmembrane segment at 194-214 (LAPIGIGISVFIAHICATNWT) threads the bilayer. Topologically, residues 215-236 (GTSINPARSFGPSVVAGFHGYD) are extracellular. The NPA 2 signature appears at 219–221 (NPA). Residues 237–257 (WIYYIGPFMGSLLAFGCYKIF) form a helical membrane-spanning segment. Residues 258–318 (KVLEYQTANP…NDSVIDDQMV (61 aa)) are Cytoplasmic-facing. A disordered region spans residues 268–318 (GQDDDNLDRSGHHHFFGHRKEPMPHTHTDNIEPKDHGVPQRNDSVIDDQMV). Residues 285–305 (HRKEPMPHTHTDNIEPKDHGV) show a composition bias toward basic and acidic residues.

It belongs to the MIP/aquaporin (TC 1.A.8) family.

It localises to the nucleus membrane. The catalysed reaction is H2O(in) = H2O(out). Its function is as follows. Probable water channel involved in responses to changes in environmental conditions and conidiation. Involved in responses to hyperosmotic conditions, oxidative stress and cell wall destabilization. Also required for proper transcriptional activation of genes involved in aurofusarin biosynthesis. Not involved in pathogenicity, but negatively regulates deoxynivalenol (DON) production. The sequence is that of Aquaporin-1 from Gibberella zeae (strain ATCC MYA-4620 / CBS 123657 / FGSC 9075 / NRRL 31084 / PH-1) (Wheat head blight fungus).